The sequence spans 75 residues: Acyl carrier protein (75 aa).

Positions 1–75 (MSVFDKVKSI…DAVNYIKENQ (75 aa)) constitute a Carrier domain. Serine 35 bears the O-(pantetheine 4'-phosphoryl)serine mark.

Belongs to the acyl carrier protein (ACP) family. 4'-phosphopantetheine is transferred from CoA to a specific serine of apo-ACP by AcpS. This modification is essential for activity because fatty acids are bound in thioester linkage to the sulfhydryl of the prosthetic group.

The protein resides in the cytoplasm. It functions in the pathway lipid metabolism; fatty acid biosynthesis. Its function is as follows. Carrier of the growing fatty acid chain in fatty acid biosynthesis. This is Acyl carrier protein from Desulfitobacterium hafniense (strain Y51).